The primary structure comprises 427 residues: Enolase 2 (427 aa).

Gln-165 lines the (2R)-2-phosphoglycerate pocket. Glu-207 functions as the Proton donor in the catalytic mechanism. Residues Asp-244, Glu-287, and Asp-314 each contribute to the Mg(2+) site. (2R)-2-phosphoglycerate is bound by residues Lys-339, Arg-368, Ser-369, and Lys-390. Lys-339 serves as the catalytic Proton acceptor.

Belongs to the enolase family. In terms of assembly, component of the RNA degradosome, a multiprotein complex involved in RNA processing and mRNA degradation. Mg(2+) is required as a cofactor.

The protein resides in the cytoplasm. The protein localises to the secreted. Its subcellular location is the cell surface. The enzyme catalyses (2R)-2-phosphoglycerate = phosphoenolpyruvate + H2O. Its pathway is carbohydrate degradation; glycolysis; pyruvate from D-glyceraldehyde 3-phosphate: step 4/5. Catalyzes the reversible conversion of 2-phosphoglycerate (2-PG) into phosphoenolpyruvate (PEP). It is essential for the degradation of carbohydrates via glycolysis. The chain is Enolase 2 from Pseudomonas syringae pv. tomato (strain ATCC BAA-871 / DC3000).